The chain runs to 153 residues: Ribosome maturation factor RimP (153 aa).

The protein belongs to the RimP family.

It is found in the cytoplasm. Functionally, required for maturation of 30S ribosomal subunits. This chain is Ribosome maturation factor RimP, found in Marinomonas sp. (strain MWYL1).